Consider the following 689-residue polypeptide: Translation initiation factor IF-2 (689 aa).

Residues 70–107 are disordered; it reads VRSKKNSNKKKKKGKGNQDKRQENFAGKQQAQTVETPD. Positions 71–84 are enriched in basic residues; sequence RSKKNSNKKKKKGK. Residues 191 to 360 form the tr-type G domain; sequence ERPAVVTIMG…LLVSEVEEYK (170 aa). Positions 200 to 207 are G1; that stretch reads GHVDHGKT. 200 to 207 is a binding site for GTP; sequence GHVDHGKT. The segment at 225–229 is G2; that stretch reads GITQH. The segment at 246–249 is G3; that stretch reads DTPG. GTP contacts are provided by residues 246–250 and 300–303; these read DTPGH and NKMD. Residues 300 to 303 are G4; that stretch reads NKMD. Residues 336 to 338 form a G5 region; it reads SAI.

The protein belongs to the TRAFAC class translation factor GTPase superfamily. Classic translation factor GTPase family. IF-2 subfamily.

Its subcellular location is the cytoplasm. One of the essential components for the initiation of protein synthesis. Protects formylmethionyl-tRNA from spontaneous hydrolysis and promotes its binding to the 30S ribosomal subunits. Also involved in the hydrolysis of GTP during the formation of the 70S ribosomal complex. The sequence is that of Translation initiation factor IF-2 from Bacillus cytotoxicus (strain DSM 22905 / CIP 110041 / 391-98 / NVH 391-98).